The chain runs to 277 residues: Large ribosomal subunit protein uL2 (277 aa).

The tract at residues 219–277 (RPQTRGSAMNPVDHPHGGGEGKKNSGRHPVTPWGKPTKGAKTRRKKASDKLIISRRKGK) is disordered. The segment covering 231-241 (DHPHGGGEGKK) has biased composition (basic and acidic residues). Over residues 256 to 277 (KGAKTRRKKASDKLIISRRKGK) the composition is skewed to basic residues.

The protein belongs to the universal ribosomal protein uL2 family. Part of the 50S ribosomal subunit. Forms a bridge to the 30S subunit in the 70S ribosome.

One of the primary rRNA binding proteins. Required for association of the 30S and 50S subunits to form the 70S ribosome, for tRNA binding and peptide bond formation. It has been suggested to have peptidyltransferase activity; this is somewhat controversial. Makes several contacts with the 16S rRNA in the 70S ribosome. The sequence is that of Large ribosomal subunit protein uL2 from Campylobacter curvus (strain 525.92).